Here is a 187-residue protein sequence, read N- to C-terminus: MPNQEKMEKAIYQFLEALGENPDREGLKDTPKRVAKMYIEMFSGLNQDPKEQFTAVFSENHEEVVIVKDIPFYSMCEHHLVPFYGKAHIAYLPNDGRVTGLSKLARAVEVASKRPQLQERLTAQVAQALEDALAPKGIFVMIEAEHMCMTMRGIKKPGSKTITTVARGLYKDDRYERQEILSLIQKG.

Zn(2+)-binding residues include C76, H79, and C148.

Belongs to the GTP cyclohydrolase I family. Toroid-shaped homodecamer, composed of two pentamers of five dimers.

It carries out the reaction GTP + H2O = 7,8-dihydroneopterin 3'-triphosphate + formate + H(+). It participates in cofactor biosynthesis; 7,8-dihydroneopterin triphosphate biosynthesis; 7,8-dihydroneopterin triphosphate from GTP: step 1/1. This is GTP cyclohydrolase 1 from Streptococcus agalactiae serotype Ia (strain ATCC 27591 / A909 / CDC SS700).